Here is a 1955-residue protein sequence, read N- to C-terminus: Protocadherin-15 (1955 aa).

An N-terminal signal peptide occupies residues 1 to 26 (MFRQFYLWTCLASGIILGSLFEICLG). The Extracellular portion of the chain corresponds to 27–1376 (QYDDDCKLAR…GESLGYTEGA (1350 aa)). Cys32 and Cys120 are oxidised to a cystine. 11 Cadherin domains span residues 40–147 (PATI…SPTF), 148–265 (KHES…GPMF), 278–395 (RPLT…SPYF), 396–509 (TMPS…TPTF), 510–616 (PEIS…PPRF), 617–717 (PQLM…APVF), 719–819 (PYLP…SPVF), 820–926 (TNST…PPVF), 927–1035 (SKRI…IPRF), 1037–1144 (QEEY…PPVF), and 1145–1259 (QKKF…PPTL). N-linked (GlcNAc...) asparagine glycosylation is found at Asn52, Asn97, and Asn201. N-linked (GlcNAc...) asparagine glycans are attached at residues Asn419, Asn559, Asn662, Asn724, Asn768, Asn821, and Asn851. 3 N-linked (GlcNAc...) asparagine glycosylation sites follow: Asn1064, Asn1084, and Asn1175. Residues 1377 to 1397 (LLALAFIIILCCIPAILVVLV) form a helical membrane-spanning segment. At 1398-1955 (SYRQFKVRQA…KQSHSQSTSL (558 aa)) the chain is on the cytoplasmic side. Residues 1426–1444 (VPAPAPVAAPPPPPPPPPG) show a composition bias toward pro residues. Disordered stretches follow at residues 1426–1446 (VPAP…PGAH), 1601–1623 (QGTR…GSSN), 1745–1766 (CPLP…APLA), and 1928–1955 (ITSE…STSL). The span at 1928–1941 (ITSEQNKGSLNNIV) shows a compositional bias: polar residues.

Antiparallel heterodimer with CDH23. Found in a complex with TMIE and LHFPL5. Interacts with LHFPL5/TMHS; this interaction is required for efficient localization to hair bundles. Interacts with MYO7A. Interacts with USH1G; this interaction may recruit USH1G to the plasma membrane. Interacts with TOMT. Isoforms CD1 and CD3 interact with TMC1 (via N-terminus) and TMC2 (via N-terminus). As to expression, expressed in brain, lung, kidney, spleen and testis. Found also in the inner and outer synaptic layers, and the nerve fiber layer in adult and fetal retinas. Found in the supporting cells, outer sulcus cells and spiral ganglion of fetal cochlea. Expressed in cytotoxic tumor-derived T- and NK-cell lines as well as biopsies of nasal NK/T-cell lymphomas. Not detected in normal or in vitro activated peripheral blood cells, CD4 or CD8 lymphocytes or NK cells. Isoform 3 is expressed in brain, heart, cerebellum and kidney. CD1 isoforms, such as isoform 1, have a limited pattern of expression and is detected in testis, retina and cochlea. CD2 isoforms, such as isoforms 4 and 5, are expressed in heart, kidney, thymus, spleen, testis, retina and cochlea. CD3 isoforms, such as isoform 6, are widely expressed.

Its subcellular location is the cell membrane. It is found in the secreted. Its function is as follows. Calcium-dependent cell-adhesion protein. Essential for maintenance of normal retinal and cochlear function. This Homo sapiens (Human) protein is Protocadherin-15 (PCDH15).